The sequence spans 251 residues: Flap endonuclease Xni (251 aa).

Aspartate 104 serves as a coordination point for Mg(2+). Residues 160 to 249 (VLPRQLPDYW…IDGNLQQLRL (90 aa)) enclose the 5'-3' exonuclease domain. Residues leucine 171, alanine 172, proline 180, valine 182, and isoleucine 185 each coordinate K(+). Residues 184-189 (GIGPKS) are interaction with DNA.

The protein belongs to the Xni family. Mg(2+) serves as cofactor. Requires K(+) as cofactor.

Has flap endonuclease activity. During DNA replication, flap endonucleases cleave the 5'-overhanging flap structure that is generated by displacement synthesis when DNA polymerase encounters the 5'-end of a downstream Okazaki fragment. The polypeptide is Flap endonuclease Xni (Salmonella paratyphi A (strain ATCC 9150 / SARB42)).